The primary structure comprises 2698 residues: Chromodomain-helicase-DNA-binding protein 6 (2698 aa).

Composition is skewed to basic and acidic residues over residues 1–12, 100–115, and 122–171; these read MKMKIQKKEKQL, EPGE…DREP, and EPKE…KRSC. The interval 1 to 243 is disordered; sequence MKMKIQKKEK…KRRSGRQVKR (243 aa). The required for DNA-dependent ATPase activity stretch occupies residues 1–746; that stretch reads MKMKIQKKEK…MMELRKCCNH (746 aa). Over residues 213 to 224 the composition is skewed to low complexity; the sequence is QSLPNPSLQSPE. Chromo domains follow at residues 291–342 and 374–438; these read NIIE…KDPR and IEID…KPVE. Positions 472–646 constitute a Helicase ATP-binding domain; the sequence is LFNWYNRKNC…FSLLNFLEPS (175 aa). Residue 485–492 participates in ATP binding; that stretch reads DEMGLGKT. Residues 597–600 carry the DEAH box motif; that stretch reads DEAH. The region spanning 786–955 is the Helicase C-terminal domain; sequence LIDKLLPKLI…LSKMEVEDLL (170 aa). The tract at residues 1318–1370 is disordered; it reads SLSAEQGVTDGTSDIPERGNIDKEDSAEDKVDGLQKQTASPSDGSDGIFGEKK. Polar residues predominate over residues 1320–1329; sequence SAEQGVTDGT. Positions 1332 to 1350 are enriched in basic and acidic residues; it reads IPERGNIDKEDSAEDKVDG. One can recognise a Myb-like domain in the interval 1435–1489; it reads RWTRREQADFYRTVSSFGVVYDQEKEAFDWTQFRAISRLDKKSDENLEHYFHSFV. Residues 1707 to 1730 show a composition bias toward polar residues; it reads EPRSFQEAPSTNMQSRKKTVTVSA. Residues 1707-1731 form a disordered region; it reads EPRSFQEAPSTNMQSRKKTVTVSAS. At Ser1852 the chain carries Phosphoserine. Disordered regions lie at residues 1935-2046, 2111-2137, 2308-2337, 2359-2387, 2538-2587, and 2626-2698; these read GLGS…ASGI, LPTP…HSFS, TTLN…QAEK, PGFG…IGSL, ASLA…PTIT, and QGRH…DDTN. 3 stretches are compositionally biased toward basic and acidic residues: residues 1943-1955, 1975-1991, and 2004-2024; these read GEKP…DPYR, FKLK…ESSE, and SEPK…KDGA. 2 stretches are compositionally biased toward low complexity: residues 2117-2127 and 2315-2336; these read SSSAGSRSSLS and PEGP…SQAE. The segment covering 2538 to 2550 has biased composition (low complexity); that stretch reads ASLASTKSGASAT. Residues 2552–2573 show a composition bias toward basic and acidic residues; that stretch reads KTTEDELSGRDVKADSLVEDKP. Polar residues-rich tracts occupy residues 2578 to 2587 and 2664 to 2675; these read FSDQSEPTIT and SDQNCTESSVTV. Residues 2677–2698 show a composition bias toward basic and acidic residues; that stretch reads PEREHVAQAREEGLKDSNDDTN.

This sequence belongs to the SNF2/RAD54 helicase family. Interacts with NFE2L2; involved in activation of the transcription. May interact with PPARA. As to expression, widely expressed.

The protein resides in the nucleus. It localises to the nucleoplasm. It catalyses the reaction ATP + H2O = ADP + phosphate + H(+). Its function is as follows. ATP-dependent chromatin-remodeling factor. Regulates transcription by disrupting nucleosomes in a largely non-sliding manner which strongly increases the accessibility of chromatin. Activates transcription of specific genes in response to oxidative stress through interaction with NFE2L2. This chain is Chromodomain-helicase-DNA-binding protein 6 (Chd6), found in Rattus norvegicus (Rat).